Reading from the N-terminus, the 32-residue chain is Yop proteins translocation protein A (32 aa).

The sequence is that of Yop proteins translocation protein A (yscA) from Yersinia pestis.